A 339-amino-acid polypeptide reads, in one-letter code: Nicotinate-nucleotide--dimethylbenzimidazole phosphoribosyltransferase (339 aa).

Glu-306 functions as the Proton acceptor in the catalytic mechanism.

It belongs to the CobT family.

It catalyses the reaction 5,6-dimethylbenzimidazole + nicotinate beta-D-ribonucleotide = alpha-ribazole 5'-phosphate + nicotinate + H(+). It functions in the pathway nucleoside biosynthesis; alpha-ribazole biosynthesis; alpha-ribazole from 5,6-dimethylbenzimidazole: step 1/2. Functionally, catalyzes the synthesis of alpha-ribazole-5'-phosphate from nicotinate mononucleotide (NAMN) and 5,6-dimethylbenzimidazole (DMB). This is Nicotinate-nucleotide--dimethylbenzimidazole phosphoribosyltransferase from Brucella anthropi (strain ATCC 49188 / DSM 6882 / CCUG 24695 / JCM 21032 / LMG 3331 / NBRC 15819 / NCTC 12168 / Alc 37) (Ochrobactrum anthropi).